Reading from the N-terminus, the 109-residue chain is Large ribosomal subunit protein uL22 (109 aa).

This sequence belongs to the universal ribosomal protein uL22 family. In terms of assembly, part of the 50S ribosomal subunit.

This protein binds specifically to 23S rRNA; its binding is stimulated by other ribosomal proteins, e.g. L4, L17, and L20. It is important during the early stages of 50S assembly. It makes multiple contacts with different domains of the 23S rRNA in the assembled 50S subunit and ribosome. Its function is as follows. The globular domain of the protein is located near the polypeptide exit tunnel on the outside of the subunit, while an extended beta-hairpin is found that lines the wall of the exit tunnel in the center of the 70S ribosome. The protein is Large ribosomal subunit protein uL22 of Ralstonia pickettii (strain 12J).